We begin with the raw amino-acid sequence, 121 residues long: MARIAGIDLPREKRVEIGLTYIYGIGLPTSQKILEVTGVNPDTRVKDLTEEEVNSIRNYIKDLTVEGDLRREVALNIKRLVEIGSYRGIRHRKGLPLRGQKTKTNARTRKGPKKTIANKKK.

Residues 93–121 (KGLPLRGQKTKTNARTRKGPKKTIANKKK) are disordered.

It belongs to the universal ribosomal protein uS13 family. Part of the 30S ribosomal subunit. Forms a loose heterodimer with protein S19. Forms two bridges to the 50S subunit in the 70S ribosome.

In terms of biological role, located at the top of the head of the 30S subunit, it contacts several helices of the 16S rRNA. In the 70S ribosome it contacts the 23S rRNA (bridge B1a) and protein L5 of the 50S subunit (bridge B1b), connecting the 2 subunits; these bridges are implicated in subunit movement. Contacts the tRNAs in the A and P-sites. This chain is Small ribosomal subunit protein uS13, found in Clostridium perfringens (strain ATCC 13124 / DSM 756 / JCM 1290 / NCIMB 6125 / NCTC 8237 / Type A).